Reading from the N-terminus, the 357-residue chain is Peptide chain release factor 1 (357 aa).

N5-methylglutamine is present on Gln236.

It belongs to the prokaryotic/mitochondrial release factor family. Post-translationally, methylated by PrmC. Methylation increases the termination efficiency of RF1.

The protein localises to the cytoplasm. Peptide chain release factor 1 directs the termination of translation in response to the peptide chain termination codons UAG and UAA. The sequence is that of Peptide chain release factor 1 from Mycobacterium marinum (strain ATCC BAA-535 / M).